Consider the following 249-residue polypeptide: Methyl-coenzyme M reductase I subunit gamma (249 aa).

Residue R120 participates in coenzyme M binding.

This sequence belongs to the methyl-coenzyme M reductase gamma subunit family. As to quaternary structure, MCR is a hexamer of two alpha, two beta, and two gamma chains, forming a dimer of heterotrimers. Coenzyme F430 serves as cofactor.

It is found in the cytoplasm. The catalysed reaction is coenzyme B + methyl-coenzyme M = methane + coenzyme M-coenzyme B heterodisulfide. It participates in one-carbon metabolism; methyl-coenzyme M reduction; methane from methyl-coenzyme M: step 1/1. Component of the methyl-coenzyme M reductase (MCR) I that catalyzes the reductive cleavage of methyl-coenzyme M (CoM-S-CH3 or 2-(methylthio)ethanesulfonate) using coenzyme B (CoB or 7-mercaptoheptanoylthreonine phosphate) as reductant which results in the production of methane and the mixed heterodisulfide of CoB and CoM (CoM-S-S-CoB). This is the final step in methanogenesis. The protein is Methyl-coenzyme M reductase I subunit gamma (mcrG) of Methanothermobacter thermautotrophicus (strain ATCC 29096 / DSM 1053 / JCM 10044 / NBRC 100330 / Delta H) (Methanobacterium thermoautotrophicum).